The chain runs to 62 residues: UPF0291 protein CLJ_B2839 (62 aa).

This sequence belongs to the UPF0291 family.

It localises to the cytoplasm. In Clostridium botulinum (strain 657 / Type Ba4), this protein is UPF0291 protein CLJ_B2839.